Consider the following 509-residue polypeptide: Cytochrome P450 monooxygenase aba1 (509 aa).

The first 31 residues, 1–31 (MSNSILNLGSFACLLSLGSIVLWYTISAVLA), serve as a signal peptide directing secretion. Asn402 carries an N-linked (GlcNAc...) asparagine glycan. Residue Cys451 coordinates heme. The N-linked (GlcNAc...) asparagine glycan is linked to Asn462.

It belongs to the cytochrome P450 family. Requires heme as cofactor.

Its pathway is hormone biosynthesis. Cytochrome P450 monooxygenase; part of the gene cluster that mediates the biosynthesis of abscisic acid (ABA), a phytohormone that acts antagonistically toward salicylic acid (SA), jasmonic acid (JA) and ethylene (ETH) signaling, to impede plant defense responses. The first step of the pathway catalyzes the reaction from farnesyl diphosphate to alpha-ionylideneethane performed by the alpha-ionylideneethane synthase aba3 via a three-step reaction mechanism involving 2 neutral intermediates, beta-farnesene and allofarnesene. The cytochrome P450 monooxygenase aba1 might then be involved in the conversion of alpha-ionylideneethane to alpha-ionylideneacetic acid. Alpha-ionylideneacetic acid is further converted to abscisic acid in 2 steps involving the cytochrome P450 monooxygenase aba2 and the short-chain dehydrogenase/reductase aba4, via the intermediates 1'-deoxy-ABA or 1',4'-trans-diol-ABA, depending on the order of action of these 2 enzymes. Aba2 is responsible for the hydroxylation of carbon atom C-1' and aba4 might be involved in the oxidation of the C-4' carbon atom. The chain is Cytochrome P450 monooxygenase aba1 (aba1) from Botryotinia fuckeliana (strain B05.10) (Noble rot fungus).